The sequence spans 726 residues: Catalase-peroxidase (726 aa).

Residues 1–33 (MSTSDDIHNTTATGKCPFHQGGHDQSAGGGTTT) are disordered. The segment at residues 105-226 (WHGAGTYRSI…LGATEMGLIY (122 aa)) is a cross-link (tryptophyl-tyrosyl-methioninium (Trp-Tyr) (with M-252)). Histidine 106 acts as the Proton acceptor in catalysis. The tryptophyl-tyrosyl-methioninium (Tyr-Met) (with W-105) cross-link spans 226-252 (YVNPEGPDHSGEPLSAAAAIRATFGNM). Residue histidine 267 participates in heme b binding.

Belongs to the peroxidase family. Peroxidase/catalase subfamily. In terms of assembly, homodimer or homotetramer. The cofactor is heme b. Formation of the three residue Trp-Tyr-Met cross-link is important for the catalase, but not the peroxidase activity of the enzyme.

It catalyses the reaction H2O2 + AH2 = A + 2 H2O. The enzyme catalyses 2 H2O2 = O2 + 2 H2O. Its function is as follows. Bifunctional enzyme with both catalase and broad-spectrum peroxidase activity. The protein is Catalase-peroxidase of Escherichia coli (strain UTI89 / UPEC).